The primary structure comprises 29 residues: Potassium channel toxin alpha-KTx 20.1 (29 aa).

Intrachain disulfides connect cysteine 2–cysteine 20, cysteine 7–cysteine 24, and cysteine 11–cysteine 26.

It belongs to the short scorpion toxin superfamily. Potassium channel inhibitor family. Alpha-KTx 20 subfamily. As to expression, expressed by the venom gland.

It localises to the secreted. Reduces potassium currents through Kv1.2/KCNA2 and Kv1.3/KCNA3 voltage-gated potassium channels. In Tityus trivittatus (Argentinean scorpion), this protein is Potassium channel toxin alpha-KTx 20.1.